We begin with the raw amino-acid sequence, 535 residues long: Atrial natriuretic peptide receptor 3 (535 aa).

The signal sequence occupies residues 1 to 26 (MRSLLLFTFSACVLLARALLAGGASS). Residues 27-40 (GGGDTGPGNRRRER) constitute a propeptide that is removed on maturation. Topologically, residues 41–477 (EALAAQKIEV…CKSCGLEESA (437 aa)) are extracellular. A glycan (N-linked (GlcNAc...) asparagine) is linked at asparagine 81. 2 cysteine pairs are disulfide-bonded: cysteine 103/cysteine 131 and cysteine 208/cysteine 256. 2 N-linked (GlcNAc...) asparagine glycosylation sites follow: asparagine 288 and asparagine 389. The helical transmembrane segment at 478–498 (VTGIVVGALLGAGLLMAFYFF) threads the bilayer. Topologically, residues 499–535 (RKKYRITIERRNHQEESNIGKHRELREDSIRSHFSVA) are cytoplasmic.

This sequence belongs to the ANF receptor family. As to quaternary structure, homodimer; disulfide-linked. Interacts with OSTN.

It is found in the cell membrane. Receptor for the natriuretic peptide hormones, binding with similar affinities atrial natriuretic peptide NPPA/ANP, brain natriuretic peptide NPPB/BNP, and C-type natriuretic peptide NPPC/CNP. May function as a clearance receptor for NPPA, NPPB and NPPC, regulating their local concentrations and effects. Acts as a regulator of osteoblast differentiation and bone growth by binding to its ligand osteocrin, thereby preventing binding between NPR3/NPR-C and natriuretic peptides, leading to increase cGMP production. This chain is Atrial natriuretic peptide receptor 3 (Npr3), found in Rattus norvegicus (Rat).